We begin with the raw amino-acid sequence, 558 residues long: Glucose-6-phosphate isomerase (558 aa).

The active-site Proton donor is the glutamate 362. Residues histidine 393 and lysine 523 contribute to the active site.

Belongs to the GPI family.

Its subcellular location is the cytoplasm. It catalyses the reaction alpha-D-glucose 6-phosphate = beta-D-fructose 6-phosphate. It functions in the pathway carbohydrate degradation; glycolysis; D-glyceraldehyde 3-phosphate and glycerone phosphate from D-glucose: step 2/4. This Drosophila yakuba (Fruit fly) protein is Glucose-6-phosphate isomerase (Pgi).